The chain runs to 919 residues: MNMNFSFCSTSSELSYPSENVLRFSVASRLFSPKWKKSFISLPCRSKTTRKVLASSRYVPGKLEDLSVVKKSLPRREPVEKLGFVRTLLIDNYDSYTFNIYQALSTINGVPPVVIRNDEWTWEEAYHYLYEDVAFDNIVISPGPGSPMCPADIGICLRLLLECRDIPILGVCLGHQALGYVHGAHVVHAPEPVHGRLSGIEHDGNILFSDIPSGRNSDFKVVRYHSLIIDKESLPKELVPIAWTIYDDTGSFSEKNSCVPVNNTGSPLGNGSVIPVSEKLENRSHWPSSHVNGKQDRHILMGIMHSSFPHYGLQFHPESIATTYGSQLFKNFKDITVNYWSRCKSTSLRRRNINDTANMQVPDATQLLKELSRTRCTGNGSSYFGNPKSLFSAKTNGVDVFDMVDSSYPKPHTKLLRLKWKKHERLAHKVGGVRNIFMELFGKNRGNDTFWLDTSSSDKARGRFSFMGGKGGSLWKQLTFSLSDQSEVTSKHAGHLLIEDSQSSTEKQFLEEGFLDFLRKELSSISYDEKDFEELPFDFCGGYVGCIGYDIKVECGMPINRHKSNAPDACFFFADNVVAIDHQLDDVYILSLYEEGTAETSFLNDTEEKLISLMGLSTRKLEDQTLPVIDSSQSKTSFVPDKSREQYINDVQSCMKYIKDGESYELCLTTQNRRKIGNADPLGLYLHLRERNPAPYAAFLNFSNANLSLCSSSPERFLKLDRNGMLEAKPIKGTIARGSTPEEDEFLKLQLKLSEKNQAENLMIVDLLRNDLGRVCEPGSVHVPNLMDVESYTTVHTMVSTIRGLKKTDISPVECVRAAFPGGSMTGAPKLRSVEILDSLENCSRGLYSGSIGYFSYNGTFDLNIVIRTVIIHEDEASIGAGGAIVALSSPEDEFEEMILKTRAPANAVMEFCSDQRRQ.

Residues 1–45 (MNMNFSFCSTSSELSYPSENVLRFSVASRLFSPKWKKSFISLPCR) constitute a chloroplast transit peptide. Residues 86–342 (RTLLIDNYDS…KDITVNYWSR (257 aa)) enclose the Glutamine amidotransferase type-1 domain. Cys-172 acts as the Nucleophile in catalysis. Catalysis depends on residues His-316 and Glu-318. Positions 436 to 910 (IFMELFGKNR…KTRAPANAVM (475 aa)) are PABB component.

This sequence in the C-terminal section; belongs to the anthranilate synthase component I family.

Its subcellular location is the plastid. The protein localises to the chloroplast. It catalyses the reaction chorismate + L-glutamine = 4-amino-4-deoxychorismate + L-glutamate. It functions in the pathway cofactor biosynthesis; tetrahydrofolate biosynthesis; 4-aminobenzoate from chorismate: step 1/2. Activated by chorismate and inhibited by dihydrofolate and methotrexate. Functionally, bifunctional enzyme that catalyzes the biosynthesis of 4-amino-4-deoxychorismate (ADC) from chorismate and glutamine. In the first step, a glutamine amidotransferase generates ammonia that is channelled between the binding sites of glutamine and chorismate and used along with chorismate in the second step, catalyzed by aminodeoxychorismate synthase, to produce ADC. Required for the synthesis of 4-aminobenzoate (PABA), an important component in tetrahydrofolate biosynthesis. Does not possess ADC lyase activity. This Arabidopsis thaliana (Mouse-ear cress) protein is Aminodeoxychorismate synthase, chloroplastic (ADCS).